Consider the following 477-residue polypeptide: Probable malate:quinone oxidoreductase (477 aa).

The protein belongs to the MQO family. It depends on FAD as a cofactor.

It carries out the reaction (S)-malate + a quinone = a quinol + oxaloacetate. Its pathway is carbohydrate metabolism; tricarboxylic acid cycle; oxaloacetate from (S)-malate (quinone route): step 1/1. This is Probable malate:quinone oxidoreductase from Synechococcus sp. (strain RCC307).